The sequence spans 195 residues: Glycerol-3-phosphate acyltransferase (195 aa).

The next 5 helical transmembrane spans lie at 3–23, 52–72, 80–100, 113–133, and 147–167; these read FQVVIFILCYFIGSIPFGFIL, LALLTLLLDALKSFICVAIAQ, ILFLAALFAIIGHMFPVYLFF, LIFIDYKVALCFLTFWIICFL, and LIALLFICTYYTIVQSVIFAI.

This sequence belongs to the PlsY family. Probably interacts with PlsX.

It localises to the cell inner membrane. The enzyme catalyses an acyl phosphate + sn-glycerol 3-phosphate = a 1-acyl-sn-glycero-3-phosphate + phosphate. The protein operates within lipid metabolism; phospholipid metabolism. In terms of biological role, catalyzes the transfer of an acyl group from acyl-phosphate (acyl-PO(4)) to glycerol-3-phosphate (G3P) to form lysophosphatidic acid (LPA). This enzyme utilizes acyl-phosphate as fatty acyl donor, but not acyl-CoA or acyl-ACP. This is Glycerol-3-phosphate acyltransferase from Ehrlichia ruminantium (strain Gardel).